The sequence spans 255 residues: tRNA (guanine-N(1)-)-methyltransferase (255 aa).

S-adenosyl-L-methionine contacts are provided by residues Gly117 and Ile137 to Leu142.

The protein belongs to the RNA methyltransferase TrmD family. Homodimer.

The protein resides in the cytoplasm. The catalysed reaction is guanosine(37) in tRNA + S-adenosyl-L-methionine = N(1)-methylguanosine(37) in tRNA + S-adenosyl-L-homocysteine + H(+). Functionally, specifically methylates guanosine-37 in various tRNAs. The polypeptide is tRNA (guanine-N(1)-)-methyltransferase (Chromobacterium violaceum (strain ATCC 12472 / DSM 30191 / JCM 1249 / CCUG 213 / NBRC 12614 / NCIMB 9131 / NCTC 9757 / MK)).